Here is a 324-residue protein sequence, read N- to C-terminus: MKTAKIYQYQLPMDSGVILREQRLQQRDGLVIELSDGIHTARGEVAPLPEFSQETLEQAREDLISLTQSWLNNEELDLDSNCPSVAFGFSMALLELEKQLPQEGNYQAAPLCSGDPDDLVVKLNEMSGKKIAKIKVGLYEPIRDGMVVNMFLELISDLSLRLDANRGWTAKKAEQFANYVHPQFRSRIEFLEEPCATPEESLAFSKATDIAIAWDETVRDDGFTVKTQEGVTAIVIKPTLVGSVEKCISLIEQAHQLGMQAVISSSIESSLALTQLARLAAWKTPETIPGLDTIDLFKMQLDTSWPNCDLPVAQLADLEAIWEN.

The Proton donor role is filled by K135. Mg(2+)-binding residues include D163, E192, and D215. Catalysis depends on K237, which acts as the Proton acceptor.

It belongs to the mandelate racemase/muconate lactonizing enzyme family. MenC type 1 subfamily. Requires a divalent metal cation as cofactor.

It carries out the reaction (1R,6R)-6-hydroxy-2-succinyl-cyclohexa-2,4-diene-1-carboxylate = 2-succinylbenzoate + H2O. Its pathway is quinol/quinone metabolism; 1,4-dihydroxy-2-naphthoate biosynthesis; 1,4-dihydroxy-2-naphthoate from chorismate: step 4/7. The protein operates within quinol/quinone metabolism; menaquinone biosynthesis. Its function is as follows. Converts 2-succinyl-6-hydroxy-2,4-cyclohexadiene-1-carboxylate (SHCHC) to 2-succinylbenzoate (OSB). This Aliivibrio fischeri (strain ATCC 700601 / ES114) (Vibrio fischeri) protein is o-succinylbenzoate synthase.